We begin with the raw amino-acid sequence, 638 residues long: MTYALLKKIDAPADLRKLDRRELRTLADELRAYVLESVSQTGGHLSSNLGTVELTIALHYVFHTPDDRVVWDVGHQSYPHKILTGRRERMNTLRQFGGISGFPRRSESQYDTFGTAHSSTSISAALGMALGARTLGEQRVSIAVIGDGAMTAGMAFEALNNAGVYKDLPLVVVLNDNDMSISPPVGALNKHLARLLSGQFYAATKKGIEKVLSVAPPVLEFAKRFEEHAKGMMVPATLFEEFGFNYIGPIDGHDLDSLVPTLQNIRKRALEGAGPQFLHVVTKKGQGYKLAEADPILYHGPGKFNPAEGIRPAAKPARKTYTQVFGEWLCDMAAADKRLIGITPAMREGSGMVEFEKRFPERYYDVGIAEQHAVTFAGGMACEGLKPIVAIYSTFLQRGYDQLIHDVALQNLPVVFALDRAGLVGADGATHAGAYDIAYLRCIPNMMVMTPSDENECRQLLTTAFHQNCPTAVRYPRGAGQGVATEAVLKDVPVGKGVMRRTGGARSGQRVAFLGFGSMVHPALGAAQALDASVADMRFVKPLDVELVKRLAEEHNYLVTVEEGSVMGGAGSAVLEALAEAGIDIPVLVLGLPDRFIDHGDPALLLSQCGLDAAGIERSVRERFGIGQAPVAVASRVA.

Thiamine diphosphate-binding positions include histidine 75 and 116-118 (AHS). Aspartate 147 provides a ligand contact to Mg(2+). Residues 148–149 (GA), asparagine 177, tyrosine 288, and glutamate 370 each bind thiamine diphosphate. Asparagine 177 contributes to the Mg(2+) binding site.

The protein belongs to the transketolase family. DXPS subfamily. In terms of assembly, homodimer. Mg(2+) is required as a cofactor. Requires thiamine diphosphate as cofactor.

It carries out the reaction D-glyceraldehyde 3-phosphate + pyruvate + H(+) = 1-deoxy-D-xylulose 5-phosphate + CO2. It participates in metabolic intermediate biosynthesis; 1-deoxy-D-xylulose 5-phosphate biosynthesis; 1-deoxy-D-xylulose 5-phosphate from D-glyceraldehyde 3-phosphate and pyruvate: step 1/1. Functionally, catalyzes the acyloin condensation reaction between C atoms 2 and 3 of pyruvate and glyceraldehyde 3-phosphate to yield 1-deoxy-D-xylulose-5-phosphate (DXP). The sequence is that of 1-deoxy-D-xylulose-5-phosphate synthase from Cupriavidus pinatubonensis (strain JMP 134 / LMG 1197) (Cupriavidus necator (strain JMP 134)).